The primary structure comprises 155 residues: Ribosomal RNA large subunit methyltransferase H (155 aa).

Residues Leu72, Gly103, and 122-127 each bind S-adenosyl-L-methionine; that span reads LSDLTL.

Belongs to the RNA methyltransferase RlmH family. In terms of assembly, homodimer.

The protein localises to the cytoplasm. The catalysed reaction is pseudouridine(1915) in 23S rRNA + S-adenosyl-L-methionine = N(3)-methylpseudouridine(1915) in 23S rRNA + S-adenosyl-L-homocysteine + H(+). In terms of biological role, specifically methylates the pseudouridine at position 1915 (m3Psi1915) in 23S rRNA. The chain is Ribosomal RNA large subunit methyltransferase H from Polaromonas naphthalenivorans (strain CJ2).